We begin with the raw amino-acid sequence, 400 residues long: MSKLILAINAGSSSLKFQLIRMPEEELVTKGLIERIGLKDSIFTIEVNGEKVKTVQDIKDHVEAVDIMLDAFKAHNIINDINDIDGTGHRVVHGGEKFPESVAITDEVEKEIEELSELAPLHNPANLMGIRAFRKLLPNIPHVAIFDTAFHQTMPEKAYLYSLPYHYYKDYGIRKYGFHGTSHKFVSQRAAEMLDKPVEDLRIISCHIGNGASIAAIDGGKSIDTSMGFTPLAGVTMGTRSGNIDPALIPFIMEKTGKTAEQVLEILNKESGLLGLSGTSSDLRDLSEEAESGKARSQMALDVFASKIHKYIGSYAARMHGVDVIVFTAGIGENSVEIRAKVLEGLEFMGVYWDPKKNENLLRGKEGFINYPHSPVKVVVIPTDEESMIARDVMTFGGLK.

Asn-9 contacts Mg(2+). Residue Lys-16 participates in ATP binding. Arg-90 contacts substrate. Asp-147 functions as the Proton donor/acceptor in the catalytic mechanism. Residues 207–211 (HIGNG), 282–284 (DLR), and 330–334 (GIGEN) each bind ATP. Glu-385 provides a ligand contact to Mg(2+).

It belongs to the acetokinase family. Homodimer. The cofactor is Mg(2+). It depends on Mn(2+) as a cofactor.

Its subcellular location is the cytoplasm. The catalysed reaction is acetate + ATP = acetyl phosphate + ADP. Its pathway is metabolic intermediate biosynthesis; acetyl-CoA biosynthesis; acetyl-CoA from acetate: step 1/2. Functionally, catalyzes the formation of acetyl phosphate from acetate and ATP. Can also catalyze the reverse reaction. This chain is Acetate kinase, found in Staphylococcus aureus (strain JH1).